Reading from the N-terminus, the 592-residue chain is Potassium-transporting ATPase potassium-binding subunit (592 aa).

A run of 10 helical transmembrane segments spans residues 7–27 (ILLG…GTYI), 60–80 (LKYA…VYAL), 132–152 (ALAV…IALI), 175–195 (LHVL…QGVI), 279–299 (LSNF…CFTF), 310–330 (WAVL…AMHF), 409–429 (GLYG…LMIG), 449–469 (IAIL…VMLA), 513–533 (VMLG…VLAI), and 556–576 (LFVT…YVPA).

It belongs to the KdpA family. As to quaternary structure, the system is composed of three essential subunits: KdpA, KdpB and KdpC.

The protein resides in the cell inner membrane. Part of the high-affinity ATP-driven potassium transport (or Kdp) system, which catalyzes the hydrolysis of ATP coupled with the electrogenic transport of potassium into the cytoplasm. This subunit binds the periplasmic potassium ions and delivers the ions to the membrane domain of KdpB through an intramembrane tunnel. The sequence is that of Potassium-transporting ATPase potassium-binding subunit from Dechloromonas aromatica (strain RCB).